Consider the following 283-residue polypeptide: Probable voltage-dependent anion-selective channel (283 aa).

The protein belongs to the eukaryotic mitochondrial porin family.

The protein localises to the mitochondrion outer membrane. Forms a channel through the cell membrane that allows diffusion of small hydrophilic molecules. Plays a role in maintaining mitochondrial morphology. The polypeptide is Probable voltage-dependent anion-selective channel (Caenorhabditis elegans).